A 142-amino-acid chain; its full sequence is Hemoglobin subunit alpha-3 (142 aa).

The Globin domain maps to 2–142 (TLTDSDKAAV…VATVLTSKYR (141 aa)). An O2-binding site is contributed by H59. H88 lines the heme b pocket.

This sequence belongs to the globin family. As to quaternary structure, heterotetramer of two alpha chains and two beta chains. As to expression, red blood cells.

Functionally, this is a larval (tadpole) alpha-globin. The polypeptide is Hemoglobin subunit alpha-3 (hba3) (Xenopus laevis (African clawed frog)).